Here is a 610-residue protein sequence, read N- to C-terminus: Menin (610 aa).

Residues 214 to 390 (GVAERSWLYL…SLLEAGEERP (177 aa)) form an interaction with FANCD2 region. The tract at residues 460–552 (REAEAAEAEE…SPPPEGPVLT (93 aa)) is disordered. Residues 484–500 (RRESKPEEPPPPKKPAL) are compositionally biased toward basic and acidic residues. 2 positions are modified to phosphoserine: serine 487 and serine 543. Threonine 594 bears the Phosphothreonine mark.

As to quaternary structure, component of the MLL-HCF complex, at least composed of KMT2A/MLL1, MEN1, ASH2L, RBBP5, DPY30, WDR5, HCFC1 and HCFC2. Component of the menin-associated histone methyltransferase complex, at least composed of KMT2B/MLL4, MEN1, ASH2L, RBBP5, DPY30 and WDR5. Interacts with POLR2B. Interacts with POLR2A phosphorylated at 'Ser-5', but not with the unphosphorylated, nor 'Ser-2' phosphorylated POLR2A forms. Interacts with FANCD2 and DBF4. Interacts with JUND (via MBM motif); inhibits the interaction of JUND with MAPK10 and the phosphorylation of JUND by MAP kinases MAPK8 and MAPK10. Interacts with SMAD3, but not with SMAD2, nor SMAD4. Directly interacts with NFKB1, NFKB2 and RELA. Interacts with KMT2A (via MBM motif). The KMT2A-MEN1 complex interacts with PSIP1 with a greater affinity as MEN1 enhances interaction of KMT2A with PSIP1. Interacts with the fusion protein KMT2A-MLLT3. In terms of tissue distribution, ubiquitous.

It localises to the nucleus. In terms of biological role, essential component of a MLL/SET1 histone methyltransferase (HMT) complex, a complex that specifically methylates 'Lys-4' of histone H3 (H3K4). Functions as a transcriptional regulator. Binds to the TERT promoter and represses telomerase expression. Plays a role in TGFB1-mediated inhibition of cell-proliferation, possibly regulating SMAD3 transcriptional activity. Represses JUND-mediated transcriptional activation on AP1 sites, as well as that mediated by NFKB subunit RELA. Positively regulates HOXC8 and HOXC6 gene expression. May be involved in normal hematopoiesis through the activation of HOXA9 expression. May be involved in DNA repair. This chain is Menin (MEN1), found in Homo sapiens (Human).